The sequence spans 153 residues: Methylglyoxal synthase (153 aa).

The region spanning 3–153 (DQVNRPKGVT…SYLSRDVPGN (151 aa)) is the MGS-like domain. Substrate contacts are provided by residues H19, K23, 45 to 48 (TGTT), and 65 to 66 (SG). The active-site Proton donor/acceptor is D71. A substrate-binding site is contributed by H98.

This sequence belongs to the methylglyoxal synthase family.

It catalyses the reaction dihydroxyacetone phosphate = methylglyoxal + phosphate. In terms of biological role, catalyzes the formation of methylglyoxal from dihydroxyacetone phosphate. The protein is Methylglyoxal synthase of Hahella chejuensis (strain KCTC 2396).